Consider the following 839-residue polypeptide: AMP deaminase (839 aa).

A helical transmembrane segment spans residues 8-28 (LALAALFGASFVAVSGFFMHF). The interval 40 to 167 (ERKENPDGDE…DDDDNLTNSE (128 aa)) is disordered. A compositionally biased stretch (gly residues) spans 85–94 (DGGGGGGGDT). 2 positions are modified to phosphoserine: Ser-134 and Ser-140. The segment covering 153 to 162 (SVEESDDDDN) has biased composition (acidic residues). Ser-203 bears the Phosphoserine mark. 289–296 (AHYPQGKS) contributes to the ATP binding site. 2 residues coordinate Zn(2+): His-391 and His-393. Substrate-binding positions include His-393 and 462-467 (KFNLKY). His-659 contacts Zn(2+). A substrate-binding site is contributed by Glu-662. His-681 serves as the catalytic Proton acceptor. Asp-736 lines the Zn(2+) pocket. 737–740 (DPLQ) contacts substrate.

This sequence belongs to the metallo-dependent hydrolases superfamily. Adenosine and AMP deaminases family. In terms of assembly, homodimer. Interacts with AHK4. Interacts with EER5. The cofactor is Zn(2+). Expressed in seedlings, roots, leaves, flowers, pollen grains, pollen tubes and siliques, and at a lower level in stems.

It is found in the membrane. The protein resides in the microsome membrane. It carries out the reaction AMP + H2O + H(+) = IMP + NH4(+). It participates in purine metabolism; IMP biosynthesis via salvage pathway; IMP from AMP: step 1/1. Its activity is regulated as follows. Activated by ATP. Activated by sulfate ions (in vitro). Inhibited by phosphate ions. Its function is as follows. AMP deaminase plays a critical role in energy metabolism. Essential for the transition from zygote to embryo. The chain is AMP deaminase from Arabidopsis thaliana (Mouse-ear cress).